Reading from the N-terminus, the 513-residue chain is Probable DNA primase large subunit (513 aa).

4 residues coordinate [4Fe-4S] cluster: cysteine 315, cysteine 398, cysteine 415, and cysteine 457.

This sequence belongs to the eukaryotic-type primase large subunit family. As to quaternary structure, heterodimer of a small subunit and a large subunit. [4Fe-4S] cluster serves as cofactor.

DNA primase is the polymerase that synthesizes small RNA primers for the Okazaki fragments made during discontinuous DNA replication. This is Probable DNA primase large subunit from Neurospora crassa (strain ATCC 24698 / 74-OR23-1A / CBS 708.71 / DSM 1257 / FGSC 987).